Consider the following 185-residue polypeptide: Peptide deformylase (185 aa).

2 residues coordinate Fe cation: Cys98 and His140. Residue Glu141 is part of the active site. His144 is a Fe cation binding site.

The protein belongs to the polypeptide deformylase family. Fe(2+) serves as cofactor.

The catalysed reaction is N-terminal N-formyl-L-methionyl-[peptide] + H2O = N-terminal L-methionyl-[peptide] + formate. In terms of biological role, removes the formyl group from the N-terminal Met of newly synthesized proteins. Requires at least a dipeptide for an efficient rate of reaction. N-terminal L-methionine is a prerequisite for activity but the enzyme has broad specificity at other positions. The polypeptide is Peptide deformylase (Parabacteroides distasonis (strain ATCC 8503 / DSM 20701 / CIP 104284 / JCM 5825 / NCTC 11152)).